The chain runs to 513 residues: Glutamate--tRNA ligase 2 (513 aa).

Residues 11–21 (PSPTGFLHIGS) carry the 'HIGH' region motif. The short motif at 240 to 244 (KLSKR) is the 'KMSKS' region element. Lys-243 contacts ATP. An RPE1 insert domain is found at 335-383 (NTLLRHLPYREEFGGNTERSTAAYIDIREDASTGLTYKLPLAVELPKKF).

Belongs to the class-I aminoacyl-tRNA synthetase family. Glutamate--tRNA ligase type 1 subfamily. Monomer.

The protein resides in the cytoplasm. It carries out the reaction tRNA(Glu) + L-glutamate + ATP = L-glutamyl-tRNA(Glu) + AMP + diphosphate. Its function is as follows. Catalyzes the attachment of glutamate to tRNA(Glu) in a two-step reaction: glutamate is first activated by ATP to form Glu-AMP and then transferred to the acceptor end of tRNA(Glu). The chain is Glutamate--tRNA ligase 2 from Rickettsia conorii (strain ATCC VR-613 / Malish 7).